A 493-amino-acid polypeptide reads, in one-letter code: Tripartite motif-containing protein 5 (493 aa).

Position 2 is an N-acetylalanine (Ala2). Residues 15–59 (CPICLELLTQPLSLDCGHSFCQACLTANHKKSTLDKGERSCPVCR) form an RING-type zinc finger. A Phosphoserine modification is found at Ser86. The B box-type zinc-finger motif lies at 90–132 (QKVDHCARHGEKLLLFCKEDGKVICWLCERSQEHRGHHTFLTE). Zn(2+) contacts are provided by Cys95, His98, Cys117, and His123. Residues 131-223 (TEEVAQKYQV…LTKSETEMVQ (93 aa)) adopt a coiled-coil conformation. The segment at 185 to 198 (FEQLRDILDWEESN) is required for interaction with GABARAP and for autophagy. A B30.2/SPRY domain is found at 281–493 (LKGMLEVFRE…VPMTLCSPSS (213 aa)).

The protein belongs to the TRIM/RBCC family. Can form homodimers and homotrimers. In addition to lower-order dimerization, also exhibits a higher-order multimerization and both low- and high-order multimerizations are essential for its restriction activity. Interacts with BTBD1 and BTBD2. Interacts with PSMC4, PSMC5, PSMD7 and HSPA8/HSC70. Interacts (via B30.2/SPRY domain) with HSPA1A/B. Interacts with PSMC2, MAP3K7/TAK1, TAB2 and TAB3. Interacts with SQSTM1. Interacts with TRIM6 and TRIM34. Interacts with ULK1 (phosphorylated form), GABARAP, GABARAPL1, GABARAPL2, MAP1LC3A, MAP1LC3C and BECN1. In terms of processing, degraded in a proteasome-independent fashion in the absence of viral infection but in a proteasome-dependent fashion following exposure to restriction sensitive virus. Autoubiquitinated in a RING finger- and UBE2D2-dependent manner. Monoubiquitinated by TRIM21. Deubiquitinated by Yersinia YopJ. Ubiquitination may not lead to proteasomal degradation.

Its subcellular location is the cytoplasm. The protein resides in the nucleus. It carries out the reaction S-ubiquitinyl-[E2 ubiquitin-conjugating enzyme]-L-cysteine + [acceptor protein]-L-lysine = [E2 ubiquitin-conjugating enzyme]-L-cysteine + N(6)-ubiquitinyl-[acceptor protein]-L-lysine.. Its pathway is protein modification; protein ubiquitination. In terms of biological role, capsid-specific restriction factor that prevents infection from non-host-adapted retroviruses. Blocks viral replication early in the life cycle, after viral entry but before reverse transcription. In addition to acting as a capsid-specific restriction factor, also acts as a pattern recognition receptor that activates innate immune signaling in response to the retroviral capsid lattice. Binding to the viral capsid triggers its E3 ubiquitin ligase activity, and in concert with the heterodimeric ubiquitin conjugating enzyme complex UBE2V1-UBE2N (also known as UBC13-UEV1A complex) generates 'Lys-63'-linked polyubiquitin chains, which in turn are catalysts in the autophosphorylation of the MAP3K7/TAK1 complex (includes TAK1, TAB2, and TAB3). Activation of the MAP3K7/TAK1 complex by autophosphorylation results in the induction and expression of NF-kappa-B and MAPK-responsive inflammatory genes, thereby leading to an innate immune response in the infected cell. Plays a role in regulating autophagy through activation of autophagy regulator BECN1 by causing its dissociation from its inhibitors BCL2 and TAB2. This chain is Tripartite motif-containing protein 5 (TRIM5), found in Pongo abelii (Sumatran orangutan).